Consider the following 138-residue polypeptide: MALKKLRFEDILLGLTLSLTFLYPLIITLIILYQDAKRKEKEMKIFQKVENIFLSKRCRERILEIVPYLEFVSDSFIEKLIKVCEFTSGKKPKDKEYKNLEEESLYLIELERGTLKVLGKWISDEEFKLLLITYEPKT.

The chain crosses the membrane as a helical span at residues 11-33; the sequence is ILLGLTLSLTFLYPLIITLIILY.

The protein localises to the membrane. This is an uncharacterized protein from Aquifex aeolicus (strain VF5).